Here is an 82-residue protein sequence, read N- to C-terminus: RNA-binding protein BPUM_0095 (82 aa).

Belongs to the eukaryotic ribosomal protein eL8 family.

This chain is RNA-binding protein BPUM_0095, found in Bacillus pumilus (strain SAFR-032).